We begin with the raw amino-acid sequence, 351 residues long: Uroporphyrinogen decarboxylase (351 aa).

Substrate is bound by residues 25 to 29 (RQAGR), Asp-74, Tyr-151, Ser-206, and His-325.

The protein belongs to the uroporphyrinogen decarboxylase family. In terms of assembly, homodimer.

Its subcellular location is the cytoplasm. It catalyses the reaction uroporphyrinogen III + 4 H(+) = coproporphyrinogen III + 4 CO2. It functions in the pathway porphyrin-containing compound metabolism; protoporphyrin-IX biosynthesis; coproporphyrinogen-III from 5-aminolevulinate: step 4/4. Its function is as follows. Catalyzes the decarboxylation of four acetate groups of uroporphyrinogen-III to yield coproporphyrinogen-III. This chain is Uroporphyrinogen decarboxylase, found in Chlorobaculum parvum (strain DSM 263 / NCIMB 8327) (Chlorobium vibrioforme subsp. thiosulfatophilum).